Here is a 224-residue protein sequence, read N- to C-terminus: Phosphoribosyltransferase domain-containing protein 1 (224 aa).

The Mg(2+) site is built by Glu140 and Asp141. Residues 140–148 (EDIINTGRT), Lys172, 193–194 (FV), and Asp200 each bind GMP. Asp200 contacts Mg(2+).

It belongs to the purine/pyrimidine phosphoribosyltransferase family.

This is Phosphoribosyltransferase domain-containing protein 1 (prtfdc1) from Xenopus tropicalis (Western clawed frog).